A 277-amino-acid chain; its full sequence is Glutamate racemase (277 aa).

Residues 25-26 (DS) and 57-58 (YG) each bind substrate. Cys-89 acts as the Proton donor/acceptor in catalysis. Residue 90-91 (NT) coordinates substrate. The active-site Proton donor/acceptor is Cys-204. 205 to 206 (TH) serves as a coordination point for substrate.

It belongs to the aspartate/glutamate racemases family.

It carries out the reaction L-glutamate = D-glutamate. It participates in cell wall biogenesis; peptidoglycan biosynthesis. Provides the (R)-glutamate required for cell wall biosynthesis. The chain is Glutamate racemase from Brucella abortus (strain 2308).